The chain runs to 500 residues: NAD(P)H-quinone oxidoreductase chain 4, chloroplastic (500 aa).

14 helical membrane-spanning segments follow: residues 4 to 24 (FPWL…IFFL), 37 to 57 (ICIC…HFQL), 87 to 107 (IGPI…AWPI), 113 to 130 (LFHF…GSFS), 134 to 154 (LLLF…LLAM), 167 to 187 (FILY…GVAL), 208 to 228 (VLEI…LPII), 242 to 262 (HYST…YGLI), 272 to 292 (AHSI…IYAA), 305 to 325 (IAYS…SLTD), 330 to 350 (GALL…FLAG), 386 to 406 (LALP…GIIT), 411 to 431 (VLIP…LTPI), and 462 to 482 (LFLS…PDFV).

It belongs to the complex I subunit 4 family.

The protein resides in the plastid. It is found in the chloroplast thylakoid membrane. The enzyme catalyses a plastoquinone + NADH + (n+1) H(+)(in) = a plastoquinol + NAD(+) + n H(+)(out). The catalysed reaction is a plastoquinone + NADPH + (n+1) H(+)(in) = a plastoquinol + NADP(+) + n H(+)(out). This chain is NAD(P)H-quinone oxidoreductase chain 4, chloroplastic, found in Atropa belladonna (Belladonna).